The following is a 122-amino-acid chain: Acidic phospholipase A2 BpirPLA2-I (122 aa).

Cystine bridges form between C26-C115, C28-C44, C43-C95, C49-C122, C50-C88, C57-C81, and C75-C86. Positions 27, 29, and 31 each coordinate Ca(2+). H47 is a catalytic residue. A Ca(2+)-binding site is contributed by D48. D89 is an active-site residue. The short motif at I105–E117 is the Antiplatelet activity element.

Belongs to the phospholipase A2 family. Group II subfamily. D49 sub-subfamily. Ca(2+) serves as cofactor. Expressed by the venom gland.

The protein localises to the secreted. The catalysed reaction is a 1,2-diacyl-sn-glycero-3-phosphocholine + H2O = a 1-acyl-sn-glycero-3-phosphocholine + a fatty acid + H(+). Its activity is regulated as follows. Inhibited by EDTA and p-bromophenacyl bromide (BPB). Functionally, snake venom phospholipase A2 (PLA2) that inhibits collagen/ADP-induced platelet aggregation, and induces hypotension in rats (activity abolished in the presence of p-bromophenacyl bromide). PLA2 catalyzes the calcium-dependent hydrolysis of the 2-acyl groups in 3-sn-phosphoglycerides. In Bothrops pirajai (Piraja's lancehead), this protein is Acidic phospholipase A2 BpirPLA2-I.